Consider the following 460-residue polypeptide: G-protein coupled receptor 22 (460 aa).

Over 1-74 (MESMPSSLTH…YPVSFQVSLT (74 aa)) the chain is Cytoplasmic. A helical membrane pass occupies residues 75-95 (GFLMLEIVLGLSSNLTVLALY). Residues 96–114 (CMKSNLVSSVSNIVTMNLH) lie on the Extracellular side of the membrane. Residues 115–135 (VLDVLVCVGCIPLTIVVVLLP) form a helical membrane-spanning segment. Topologically, residues 136 to 144 (LEGNNALIC) are cytoplasmic. A helical transmembrane segment spans residues 145–165 (CFHEACVSFASVATAANVLAI). Topologically, residues 166 to 185 (TLDRYDISVRPANRVLTMGR) are extracellular. The helical transmembrane segment at 186–206 (AVALLGSIWALSFFSFLVPFI) threads the bilayer. Over 207–235 (EEGFFSQAGNERNQTEAEEPSNEYYTELG) the chain is Cytoplasmic. The chain crosses the membrane as a helical span at residues 236–256 (LYYHLLAQIPIFFFTAVVMLV). The Extracellular segment spans residues 257–343 (TYYKILQALN…ERQKRVFRMS (87 aa)). A compositionally biased stretch (basic residues) spans 276–286 (VPKKKPRKKKT). Residues 276 to 309 (VPKKKPRKKKTISMTSTQPESTDASQSSAGRNAP) are disordered. Positions 287 to 305 (ISMTSTQPESTDASQSSAG) are enriched in polar residues. Residues 344–364 (LLIISTFLLCWTPITVLNTVI) form a helical membrane-spanning segment. Topologically, residues 365–377 (LSVGPSNFTVRLR) are cytoplasmic. The chain crosses the membrane as a helical span at residues 378–398 (LGFLVMAYGTTIFHPLLYAFT). Residues 399–460 (RQKFQKVLKS…QKCLSSEDVE (62 aa)) lie on the Extracellular side of the membrane.

It belongs to the G-protein coupled receptor 1 family.

It localises to the cell membrane. In terms of biological role, orphan G-protein coupled receptor that regulates cilia length and structure in the Kupffer's vesicle leading to the left-right asymmetry development by establishing a directional fluid flow. The sequence is that of G-protein coupled receptor 22 (gpr22a) from Danio rerio (Zebrafish).